Reading from the N-terminus, the 469-residue chain is Sulfate adenylyltransferase subunit 1 (469 aa).

A tr-type G domain is found at 22–237; that stretch reads KEVLRFITCG…LEEVPVKSEE (216 aa). Residues 31 to 38 are G1; sequence GSVDDGKS. 31-38 serves as a coordination point for GTP; it reads GSVDDGKS. Residues 89–93 form a G2 region; the sequence is GITID. Residues 110–113 form a G3 region; the sequence is DTPG. GTP is bound by residues 110-114 and 165-168; these read DTPGH and NKMD. Residues 165–168 are G4; sequence NKMD. Residues 202–204 are G5; the sequence is SAK.

This sequence belongs to the TRAFAC class translation factor GTPase superfamily. Classic translation factor GTPase family. CysN/NodQ subfamily. Heterodimer composed of CysD, the smaller subunit, and CysN.

The catalysed reaction is sulfate + ATP + H(+) = adenosine 5'-phosphosulfate + diphosphate. It participates in sulfur metabolism; hydrogen sulfide biosynthesis; sulfite from sulfate: step 1/3. Functionally, with CysD forms the ATP sulfurylase (ATPS) that catalyzes the adenylation of sulfate producing adenosine 5'-phosphosulfate (APS) and diphosphate, the first enzymatic step in sulfur assimilation pathway. APS synthesis involves the formation of a high-energy phosphoric-sulfuric acid anhydride bond driven by GTP hydrolysis by CysN coupled to ATP hydrolysis by CysD. This is Sulfate adenylyltransferase subunit 1 from Methylorubrum extorquens (strain CM4 / NCIMB 13688) (Methylobacterium extorquens).